Here is a 466-residue protein sequence, read N- to C-terminus: Muscarinic acetylcholine receptor M2 (466 aa).

Residues 1–22 lie on the Extracellular side of the membrane; that stretch reads MNNSTNSSNSGLALTSPYKTFE. N-linked (GlcNAc...) asparagine glycans are attached at residues Asn-2, Asn-3, and Asn-6. Residues 23–45 traverse the membrane as a helical segment; sequence VVFIVLVAGSLSLVTIIGNILVM. Over 46–59 the chain is Cytoplasmic; it reads VSIKVNRHLQTVNN. Residues 60–80 form a helical membrane-spanning segment; that stretch reads YFLFSLACADLIIGVFSMNLY. Topologically, residues 81 to 97 are extracellular; it reads TLYTVIGYWPLGPVVCD. A disulfide bridge links Cys-96 with Cys-176. The helical transmembrane segment at 98–119 threads the bilayer; that stretch reads LWLALDYVVSNASVMNLLIISF. Residues 120–122 carry the Important for signaling motif; that stretch reads DRY. Over 120-139 the chain is Cytoplasmic; sequence DRYFCVTKPLTYPVKRTTKM. The chain crosses the membrane as a helical span at residues 140–162; the sequence is AGMMIAAAWVLSFILWAPAILFW. The Extracellular segment spans residues 163-184; the sequence is QFIVGVRTVEDGECYIQFFSNA. The chain crosses the membrane as a helical span at residues 185-209; the sequence is AVTFGTAIAAFYLPVIIMTVLYWHI. Residues 210–387 lie on the Cytoplasmic side of the membrane; it reads SRASKSRIKK…PPSREKKVTR (178 aa). A disordered region spans residues 218 to 320; that stretch reads KKDKKEPVAN…SLGHSKDENS (103 aa). Phosphoserine is present on Ser-232. Residues 254–270 are compositionally biased toward basic and acidic residues; it reads ALEHNKIQNGKAPRDAV. Composition is skewed to polar residues over residues 284–293 and 304–313; these read NDSTSVSAVA and DENTVSTSLG. The chain crosses the membrane as a helical span at residues 388 to 410; it reads TILAILLAFIITWAPYNVMVLIN. The Extracellular portion of the chain corresponds to 411-418; the sequence is TFCAPCIP. The cysteines at positions 413 and 416 are disulfide-linked. A helical transmembrane segment spans residues 419 to 442; sequence NTVWTIGYWLCYINSTINPACYAL. The Important for signaling motif lies at 436–440; it reads NPACY. Over 443-466 the chain is Cytoplasmic; the sequence is CNATFKKTFKHLLMCHYKNIGATR. Residues Thr-446, Thr-450, and Thr-465 each carry the phosphothreonine modification.

This sequence belongs to the G-protein coupled receptor 1 family. Muscarinic acetylcholine receptor subfamily. CHRM2 sub-subfamily. As to quaternary structure, interacts with ARRB1 and ARRB2. Interacts with RACK1; the interaction regulates CHRM2 internalization. In terms of processing, phosphorylated in response to agonist treatment.

It localises to the cell membrane. Its subcellular location is the postsynaptic cell membrane. Functionally, the muscarinic acetylcholine receptor mediates various cellular responses, including inhibition of adenylate cyclase, breakdown of phosphoinositides and modulation of potassium channels through the action of G proteins. Primary transducing effect is adenylate cyclase inhibition. This Sus scrofa (Pig) protein is Muscarinic acetylcholine receptor M2 (CHRM2).